We begin with the raw amino-acid sequence, 253 residues long: REF/SRPP-like protein Os05g0151300/LOC_Os05g05940 (253 aa).

The tract at residues 1-26 (MADSGSDAPISNRPEEEVTVEKTPEM) is disordered. A compositionally biased stretch (basic and acidic residues) spans 13–26 (RPEEEVTVEKTPEM).

Belongs to the REF/SRPP family.

This Oryza sativa subsp. japonica (Rice) protein is REF/SRPP-like protein Os05g0151300/LOC_Os05g05940.